Reading from the N-terminus, the 106-residue chain is Glutaredoxin-1 (106 aa).

The residue at position 2 (Ala2) is an N-acetylalanine. The 104-residue stretch at 3–106 (QEFVNCKIQP…TRLKQIGALQ (104 aa)) folds into the Glutaredoxin domain. Lys9 is modified (N6-succinyllysine). 2 disulfides stabilise this stretch: Cys23–Cys26 and Cys79–Cys83.

The protein belongs to the glutaredoxin family.

The protein resides in the cytoplasm. Its function is as follows. Has a glutathione-disulfide oxidoreductase activity in the presence of NADPH and glutathione reductase. Reduces low molecular weight disulfides and proteins. The protein is Glutaredoxin-1 (GLRX) of Homo sapiens (Human).